Consider the following 624-residue polypeptide: Chaperone protein HtpG (624 aa).

The tract at residues 1–336 is a; substrate-binding; it reads MSMKGQETRG…SNDLPLNVSR (336 aa). The segment at 337–552 is b; the sequence is EILQDSRVTQ…ADEMSTQMAK (216 aa). Residues 553–624 are c; that stretch reads LFAAAGQQAP…IRRMNQLLTA (72 aa).

Belongs to the heat shock protein 90 family. As to quaternary structure, homodimer.

The protein localises to the cytoplasm. Its function is as follows. Molecular chaperone. Has ATPase activity. This is Chaperone protein HtpG from Yersinia enterocolitica serotype O:8 / biotype 1B (strain NCTC 13174 / 8081).